Consider the following 230-residue polypeptide: Ureidoacrylate amidohydrolase RutB (230 aa).

D24 acts as the Proton acceptor in catalysis. The active site involves K133. The active-site Nucleophile is C166.

Belongs to the isochorismatase family. RutB subfamily.

It carries out the reaction (Z)-3-ureidoacrylate + H2O + H(+) = (Z)-3-aminoacrylate + NH4(+) + CO2. It catalyses the reaction (Z)-3-ureidoacrylate + H2O = (Z)-3-aminoacrylate + carbamate + H(+). The catalysed reaction is (Z)-2-methylureidoacrylate + H2O + H(+) = (Z)-2-methylaminoacrylate + NH4(+) + CO2. In terms of biological role, hydrolyzes ureidoacrylate to form aminoacrylate and carbamate. The carbamate hydrolyzes spontaneously, thereby releasing one of the nitrogen atoms of the pyrimidine ring as ammonia and one of its carbon atoms as CO2. This chain is Ureidoacrylate amidohydrolase RutB, found in Escherichia coli (strain K12 / MC4100 / BW2952).